Here is a 426-residue protein sequence, read N- to C-terminus: MSQVLDARAGKITPEMEKVAADEKVDVEFVRAGVAEGTIVIPRNTNRKVLKPCGIGRGLRIKVNALIGTSSDRDDRQMEMRKIAAAEAAGCDSFMDLSTGGDIDEMRRLTLAHARVPVGSVPIYQAAIEAIEKRGSIVAMTPDDMFAAVEKQARDGIDFMAIHSALNFEILERLQASGRVTDIVSRGGAFLTGWMLHNQKENPLYEQFDRLLEILLKYDVTLSLGDAIRPGSTADSLDGAQLQGMIVAGELVRRAREAGVQVMVEGPGHVPLNHVETTMKLQKSLCGGAPYFILGTLATDVAPGYDHITAAIGGALAGTVGADFICYVTPAEHLGLPTEQDVKEGVIAARIAAHAADLARGNRQAWERDLQMARARVALDVEKQISLAIDQEKARSLLDGTGEDGVCAACGTNCAALVAARYFGMN.

Residues Met95, Tyr124, His163, 185-187 (SRG), 226-229 (DAIR), and Glu265 each bind substrate. Zn(2+) is bound at residue His269. Phe292 contributes to the substrate binding site. His333 contacts Zn(2+). Positions 407, 410, and 414 each coordinate [4Fe-4S] cluster.

Belongs to the ThiC family. 5-hydroxybenzimidazole synthase subfamily. [4Fe-4S] cluster is required as a cofactor.

The enzyme catalyses 5-amino-1-(5-phospho-beta-D-ribosyl)imidazole + AH2 + S-adenosyl-L-methionine = 5-hydroxybenzimidazole + 5'-deoxyadenosine + formate + L-methionine + A + NH4(+) + phosphate + 2 H(+). In terms of biological role, together with BzaA, probably catalyzes the conversion of aminoimidazole ribotide (AIR) to 5-hydroxybenzimidazole (5-HBI) in a radical S-adenosyl-L-methionine (SAM)-dependent reaction. Is thus involved in the anaerobic biosynthesis of the benzimidazole lower axial ligand of the cobamide produced by M.thermoacetica. Requires BzaA for catalytic activity, as BzaB alone displays no activity. This Moorella thermoacetica (strain ATCC 39073 / JCM 9320) protein is 5-hydroxybenzimidazole synthase BzaB.